A 512-amino-acid polypeptide reads, in one-letter code: Lysine--tRNA ligase (512 aa).

Residues E421 and E428 each contribute to the Mg(2+) site.

It belongs to the class-II aminoacyl-tRNA synthetase family. Homodimer. Requires Mg(2+) as cofactor.

The protein resides in the cytoplasm. It carries out the reaction tRNA(Lys) + L-lysine + ATP = L-lysyl-tRNA(Lys) + AMP + diphosphate. This is Lysine--tRNA ligase from Aeromonas salmonicida (strain A449).